Consider the following 203-residue polypeptide: Peptide deformylase (203 aa).

Positions 130 and 173 each coordinate Fe cation. Residue E174 is part of the active site. Residue H177 participates in Fe cation binding.

This sequence belongs to the polypeptide deformylase family. Fe(2+) serves as cofactor.

It catalyses the reaction N-terminal N-formyl-L-methionyl-[peptide] + H2O = N-terminal L-methionyl-[peptide] + formate. Removes the formyl group from the N-terminal Met of newly synthesized proteins. Requires at least a dipeptide for an efficient rate of reaction. N-terminal L-methionine is a prerequisite for activity but the enzyme has broad specificity at other positions. The sequence is that of Peptide deformylase from Streptococcus pneumoniae serotype 2 (strain D39 / NCTC 7466).